Consider the following 395-residue polypeptide: 1-deoxy-D-xylulose 5-phosphate reductoisomerase (395 aa).

6 residues coordinate NADPH: T10, G11, S12, I13, K37, and N123. Residue K124 coordinates 1-deoxy-D-xylulose 5-phosphate. E125 serves as a coordination point for NADPH. D149 provides a ligand contact to Mn(2+). 4 residues coordinate 1-deoxy-D-xylulose 5-phosphate: S150, E151, S185, and H208. Residue E151 coordinates Mn(2+). An NADPH-binding site is contributed by G214. 1-deoxy-D-xylulose 5-phosphate-binding residues include S221, N226, K227, and E230. E230 is a Mn(2+) binding site.

This sequence belongs to the DXR family. Requires Mg(2+) as cofactor. It depends on Mn(2+) as a cofactor.

The catalysed reaction is 2-C-methyl-D-erythritol 4-phosphate + NADP(+) = 1-deoxy-D-xylulose 5-phosphate + NADPH + H(+). Its pathway is isoprenoid biosynthesis; isopentenyl diphosphate biosynthesis via DXP pathway; isopentenyl diphosphate from 1-deoxy-D-xylulose 5-phosphate: step 1/6. Catalyzes the NADPH-dependent rearrangement and reduction of 1-deoxy-D-xylulose-5-phosphate (DXP) to 2-C-methyl-D-erythritol 4-phosphate (MEP). This chain is 1-deoxy-D-xylulose 5-phosphate reductoisomerase, found in Shewanella loihica (strain ATCC BAA-1088 / PV-4).